The chain runs to 220 residues: Protein-L-isoaspartate O-methyltransferase (220 aa).

The active site involves serine 64.

This sequence belongs to the methyltransferase superfamily. L-isoaspartyl/D-aspartyl protein methyltransferase family.

It is found in the cytoplasm. The enzyme catalyses [protein]-L-isoaspartate + S-adenosyl-L-methionine = [protein]-L-isoaspartate alpha-methyl ester + S-adenosyl-L-homocysteine. Functionally, catalyzes the methyl esterification of L-isoaspartyl residues in peptides and proteins that result from spontaneous decomposition of normal L-aspartyl and L-asparaginyl residues. It plays a role in the repair and/or degradation of damaged proteins. This chain is Protein-L-isoaspartate O-methyltransferase, found in Methanoculleus marisnigri (strain ATCC 35101 / DSM 1498 / JR1).